The primary structure comprises 576 residues: Sulfite reductase [NADPH] hemoprotein beta-component (576 aa).

[4Fe-4S] cluster is bound by residues Cys435, Cys441, Cys480, and Cys484. Residue Cys484 coordinates siroheme.

This sequence belongs to the nitrite and sulfite reductase 4Fe-4S domain family. Alpha(8)-beta(8). The alpha component is a flavoprotein, the beta component is a hemoprotein. It depends on siroheme as a cofactor. The cofactor is [4Fe-4S] cluster.

It carries out the reaction hydrogen sulfide + 3 NADP(+) + 3 H2O = sulfite + 3 NADPH + 4 H(+). It functions in the pathway sulfur metabolism; hydrogen sulfide biosynthesis; hydrogen sulfide from sulfite (NADPH route): step 1/1. Component of the sulfite reductase complex that catalyzes the 6-electron reduction of sulfite to sulfide. This is one of several activities required for the biosynthesis of L-cysteine from sulfate. The protein is Sulfite reductase [NADPH] hemoprotein beta-component of Yersinia pseudotuberculosis serotype O:1b (strain IP 31758).